A 147-amino-acid chain; its full sequence is Ubiquitin-conjugating enzyme E2 4 (147 aa).

Residues 1-147 (MALKRINREL…AREWTRKYAI (147 aa)) enclose the UBC core domain. Cys85 (glycyl thioester intermediate) is an active-site residue.

The protein belongs to the ubiquitin-conjugating enzyme family. In terms of assembly, interacts with the E1 ubiquitin-activating enzyme ptr3 and E3 ubiquitin-protein ligase pub2.

It carries out the reaction S-ubiquitinyl-[E1 ubiquitin-activating enzyme]-L-cysteine + [E2 ubiquitin-conjugating enzyme]-L-cysteine = [E1 ubiquitin-activating enzyme]-L-cysteine + S-ubiquitinyl-[E2 ubiquitin-conjugating enzyme]-L-cysteine.. Its pathway is protein modification; protein ubiquitination. E2 ubiquitin-conjugating enzyme that catalyzes the covalent attachment of ubiquitin to other proteins. Mediates the selective degradation of short-lived and abnormal proteins. Mediates ubiquitination of pex5. The chain is Ubiquitin-conjugating enzyme E2 4 (ubc4) from Schizosaccharomyces pombe (strain 972 / ATCC 24843) (Fission yeast).